Consider the following 672-residue polypeptide: Spermatid perinuclear RNA-binding protein (672 aa).

The DZF domain occupies R5 to L363. 2 disordered regions span residues T52–Y73 and G349–K371. A compositionally biased stretch (basic and acidic residues) spans R357–K371. Residues D387–Y453 form the DRBM 1 domain. Residues S466–N476 show a composition bias toward basic and acidic residues. Residues S466 to E499 are disordered. A compositionally biased stretch (low complexity) spans E477–T497. One can recognise a DRBM 2 domain in the interval S510 to S576. Asymmetric dimethylarginine is present on residues R612 and R617.

As to quaternary structure, interacts with EIF2AK2. Associates with microtubules; it is unsure whether such interaction is direct or indirect.

The protein localises to the cytoplasm. In terms of biological role, involved in spermatogenesis and sperm function. Plays a role in regulation of cell growth. Binds to double-stranded DNA and RNA. Binds most efficiently to poly(I:C) RNA than to poly(dI:dC) DNA. Binds also to single-stranded poly(G) RNA. Binds non-specifically to the mRNA PRM1 3'-UTR and adenovirus VA RNA. The protein is Spermatid perinuclear RNA-binding protein (STRBP) of Pongo abelii (Sumatran orangutan).